A 115-amino-acid chain; its full sequence is Nucleoid-associated protein NATL1_00191 (115 aa).

The segment at 89 to 115 (STSTMKERMEDLTGGFKLNLPGMGEES) is disordered.

The protein belongs to the YbaB/EbfC family. As to quaternary structure, homodimer.

The protein localises to the cytoplasm. Its subcellular location is the nucleoid. Binds to DNA and alters its conformation. May be involved in regulation of gene expression, nucleoid organization and DNA protection. This chain is Nucleoid-associated protein NATL1_00191, found in Prochlorococcus marinus (strain NATL1A).